A 207-amino-acid polypeptide reads, in one-letter code: MKFNATARSVQGSSASRRLRRAGRVPAIVYGGSAAPLNIELDHNEIYHALRKEEFHASILQMQLDGKEEAVLLRSVQWHAYKPQVLHVDFQRVDANQALHTKVPLHFINGENSPAVKLSSAIISHVVTELEITCLPAALPQYIEVDLGNLLGGGSVHLSDVKLPKGVTYVAHGSDANPVLASALVKGGGAAAADEGGDAAAAETPAA.

The protein belongs to the bacterial ribosomal protein bL25 family. CTC subfamily. In terms of assembly, part of the 50S ribosomal subunit; part of the 5S rRNA/L5/L18/L25 subcomplex. Contacts the 5S rRNA. Binds to the 5S rRNA independently of L5 and L18.

Its function is as follows. This is one of the proteins that binds to the 5S RNA in the ribosome where it forms part of the central protuberance. This is Large ribosomal subunit protein bL25 from Bordetella petrii (strain ATCC BAA-461 / DSM 12804 / CCUG 43448).